A 536-amino-acid chain; its full sequence is Transcriptional regulator RPN4 (536 aa).

Composition is skewed to low complexity over residues 154–181 (QEQQSQLPQPQQPISQQDKQRPQSQQQQ) and 361–370 (SPSAISPASP). Disordered regions lie at residues 154–196 (QEQQ…TRRR), 353–375 (VFDQPKEVSPSAISPASPDSDDM), and 393–434 (EEIN…AEIT). Basic and acidic residues predominate over residues 393 to 411 (EEINKKHSKSGKKESKSQK). The C2H2-type zinc finger occupies 440–471 (HQCNLINPSTGEPCNKQFSRPYDLIRHQDTIH).

The protein resides in the nucleus. In terms of biological role, transcriptional activator of a number of genes encoding proteasomal subunits. Binds to the DNA sequence 5'-GAAGGCAAAA-3', enriched in regions upstream of proteasome genes. This chain is Transcriptional regulator RPN4 (RPN4), found in Candida albicans (strain SC5314 / ATCC MYA-2876) (Yeast).